The chain runs to 409 residues: MRQALLERFLRYIKIDTQSDGKNLESPSTPSQFEFAKLLKLELEELGFHRVELSDKGYLSASVPKTIEGVPCIGFIAHLDTAPDFSGANVTPQLINDYDGSEIKLGEDEVLSPELFPHMLKYLGKTLITTDGTSLLGGDDKAGISEIITALHYLLEHPEIPHGEIRLCFTPDEEIGRGADHFDVPEFGAQWAYTIDGGQLGELEFENFNAATAVITAKGNNCHPGTAYGVMVNAQTMAARFHAKMPLHDTPEGSKDYDGFFHLINMQGQTEEAELTYIIRDFDLELFEKRKTWLTERVKSYNADLVLGSLEIEITDSYFNMKEQILPYPHIIDIAEKAITNQGVTPLIKPIRGGTDGSRLSYMGLPCPNIFTGGHNFHGKHEYICLESMEKAVDVIIDICKLTAEEQQA.

His78 provides a ligand contact to Zn(2+). Asp80 is an active-site residue. Residue Asp139 coordinates Zn(2+). Glu173 functions as the Proton acceptor in the catalytic mechanism. Residues Glu174, Asp196, and His378 each contribute to the Zn(2+) site.

This sequence belongs to the peptidase M20B family. The cofactor is Zn(2+).

Its subcellular location is the cytoplasm. The enzyme catalyses Release of the N-terminal residue from a tripeptide.. Cleaves the N-terminal amino acid of tripeptides. This chain is Peptidase T, found in Shewanella sediminis (strain HAW-EB3).